The primary structure comprises 171 residues: uncharacterized protein (171 aa).

This is an uncharacterized protein from Thermofilum pendens.